A 62-amino-acid chain; its full sequence is Conotoxin reg3.5 (62 aa).

Positions 1-22 are cleaved as a signal peptide; sequence MMFKLGVLLTICLLLFPLTGTA. Residues 23 to 49 constitute a propeptide that is removed on maturation; it reads LDGDQLAEHMLDISSGINDRWFDPVRK. 3 disulfide bridges follow: Cys50–Cys60, Cys51–Cys58, and Cys56–Cys61.

The protein belongs to the conotoxin M superfamily. As to expression, expressed by the venom duct.

The protein localises to the secreted. This Conus regius (Crown cone) protein is Conotoxin reg3.5.